We begin with the raw amino-acid sequence, 442 residues long: MRKAMNKLPKIDKIPNLKEFQNYFKPALLDISKSVLEEIRSKNQNETISEQDVINLIKNAYAKFQNIEPKPLINATGVIIHTNLGRSPISEDLIKQATHLMTSYSNLEYGLSSGKRGDRYAYTSYLLKLLFGCEDALIVNNNAAAVFLILNSFADEKEVLVSRGELVEIGGSFRVPEVMKNSGAILKEIGTTNKTHLSDYENSINENTAMILKVHKSNYDIVGFSSEVSINDIAKLTQKRGILNYYDLGSGYVNTLPYSLSKDEPNVKKLIQSGVDIISFSGDKLFGSVQCGIILGKKELINKLKNNQILRMLRVDKMVLSMLNETIKAYLNKDFHLIKPINQIYKTLSELEVQAKKVLENIKLEASIKETKTFVGGGTMPNKSYPSIGLFFKGNANKNEFKFRKYGIIGRIENAEFLLDFRSIFENDIENIIKIINGMSDE.

An N6-(pyridoxal phosphate)lysine modification is found at K284.

Belongs to the SelA family. It depends on pyridoxal 5'-phosphate as a cofactor.

The protein resides in the cytoplasm. The enzyme catalyses L-seryl-tRNA(Sec) + selenophosphate + H(+) = L-selenocysteinyl-tRNA(Sec) + phosphate. Its pathway is aminoacyl-tRNA biosynthesis; selenocysteinyl-tRNA(Sec) biosynthesis; selenocysteinyl-tRNA(Sec) from L-seryl-tRNA(Sec) (bacterial route): step 1/1. Converts seryl-tRNA(Sec) to selenocysteinyl-tRNA(Sec) required for selenoprotein biosynthesis. The chain is L-seryl-tRNA(Sec) selenium transferase from Campylobacter fetus subsp. fetus (strain 82-40).